Here is a 299-residue protein sequence, read N- to C-terminus: Oxygen-dependent coproporphyrinogen-III oxidase (299 aa).

A substrate-binding site is contributed by serine 92. 2 residues coordinate Mn(2+): histidine 96 and histidine 106. Catalysis depends on histidine 106, which acts as the Proton donor. 108 to 110 (NVR) provides a ligand contact to substrate. The Mn(2+) site is built by histidine 145 and histidine 175. The segment at 240-275 (YVEFNLVWDRGTLFGLQTGGRTESILMSMPPLVRWE) is important for dimerization. 258-260 (GGR) is a binding site for substrate.

This sequence belongs to the aerobic coproporphyrinogen-III oxidase family. In terms of assembly, homodimer. It depends on Mn(2+) as a cofactor.

It localises to the cytoplasm. It catalyses the reaction coproporphyrinogen III + O2 + 2 H(+) = protoporphyrinogen IX + 2 CO2 + 2 H2O. The protein operates within porphyrin-containing compound metabolism; protoporphyrin-IX biosynthesis; protoporphyrinogen-IX from coproporphyrinogen-III (O2 route): step 1/1. Its function is as follows. Involved in the heme biosynthesis. Catalyzes the aerobic oxidative decarboxylation of propionate groups of rings A and B of coproporphyrinogen-III to yield the vinyl groups in protoporphyrinogen-IX. The protein is Oxygen-dependent coproporphyrinogen-III oxidase of Escherichia fergusonii (strain ATCC 35469 / DSM 13698 / CCUG 18766 / IAM 14443 / JCM 21226 / LMG 7866 / NBRC 102419 / NCTC 12128 / CDC 0568-73).